Reading from the N-terminus, the 158-residue chain is Ecotin (158 aa).

An N-terminal signal peptide occupies residues 1-21 (MRLLPLASVTLLSVLCAQAFA). Cysteine 67 and cysteine 104 are joined by a disulfide.

Belongs to the protease inhibitor I11 (ecotin) family. In terms of assembly, homodimer.

It localises to the periplasm. Its function is as follows. General inhibitor of family S1 serine proteases. This is Ecotin from Pseudomonas fluorescens (strain ATCC BAA-477 / NRRL B-23932 / Pf-5).